A 62-amino-acid polypeptide reads, in one-letter code: Photosystem II reaction center protein Z (62 aa).

2 consecutive transmembrane segments (helical) span residues 8–28 and 41–61; these read AVFA…VVLA and FSGA…NSFI.

Belongs to the PsbZ family. As to quaternary structure, PSII is composed of 1 copy each of membrane proteins PsbA, PsbB, PsbC, PsbD, PsbE, PsbF, PsbH, PsbI, PsbJ, PsbK, PsbL, PsbM, PsbT, PsbY, PsbZ, Psb30/Ycf12, at least 3 peripheral proteins of the oxygen-evolving complex and a large number of cofactors. It forms dimeric complexes.

It localises to the plastid. The protein localises to the chloroplast thylakoid membrane. May control the interaction of photosystem II (PSII) cores with the light-harvesting antenna, regulates electron flow through the 2 photosystem reaction centers. PSII is a light-driven water plastoquinone oxidoreductase, using light energy to abstract electrons from H(2)O, generating a proton gradient subsequently used for ATP formation. The protein is Photosystem II reaction center protein Z of Anthoceros angustus (Hornwort).